The primary structure comprises 303 residues: tRNA (guanine-N(7)-)-methyltransferase (303 aa).

The disordered stretch occupies residues 1–64 (MPKPHQVQVI…STSDKISLPR (64 aa)). The span at 10 to 38 (IKDRETQLREQQEAESKRRTYRDVKEETR) shows a compositional bias: basic and acidic residues. Residues G118, 141–142 (EI), 177–178 (NA), and C197 contribute to the S-adenosyl-L-methionine site. D200 is an active-site residue. Residue 275 to 277 (TEE) participates in S-adenosyl-L-methionine binding.

Belongs to the class I-like SAM-binding methyltransferase superfamily. TrmB family. As to quaternary structure, forms a complex with TRM82.

It localises to the nucleus. It carries out the reaction guanosine(46) in tRNA + S-adenosyl-L-methionine = N(7)-methylguanosine(46) in tRNA + S-adenosyl-L-homocysteine. It functions in the pathway tRNA modification; N(7)-methylguanine-tRNA biosynthesis. Its function is as follows. Catalyzes the formation of N(7)-methylguanine at position 46 (m7G46) in tRNA. This is tRNA (guanine-N(7)-)-methyltransferase from Scheffersomyces stipitis (strain ATCC 58785 / CBS 6054 / NBRC 10063 / NRRL Y-11545) (Yeast).